We begin with the raw amino-acid sequence, 462 residues long: Alkaline phosphatase 3 (462 aa).

Residues 1–32 (MKKFPKKLLPIAVLSSIAFSSLASGSVPEASA) form the signal peptide. Residue Asp52 participates in Mg(2+) binding. Position 52 (Asp52) interacts with Zn(2+). The Phosphoserine intermediate role is filled by Ser101. Mg(2+) is bound by residues Thr154 and Glu275. The Zn(2+) site is built by Asp280, His284, Asp322, His323, and His419.

The protein belongs to the alkaline phosphatase family. In terms of assembly, monomer. The cofactor is Mg(2+). Zn(2+) serves as cofactor.

The enzyme catalyses a phosphate monoester + H2O = an alcohol + phosphate. This Bacillus subtilis (strain 168) protein is Alkaline phosphatase 3 (phoB).